Here is a 465-residue protein sequence, read N- to C-terminus: Phenylalanine--tRNA ligase alpha subunit (465 aa).

T311 and F389 together coordinate L-phenylalanine. Mg(2+) is bound at residue E391.

It belongs to the class-II aminoacyl-tRNA synthetase family. Phe-tRNA synthetase alpha subunit type 2 subfamily. In terms of assembly, tetramer of two alpha and two beta subunits. Mg(2+) is required as a cofactor.

Its subcellular location is the cytoplasm. It carries out the reaction tRNA(Phe) + L-phenylalanine + ATP = L-phenylalanyl-tRNA(Phe) + AMP + diphosphate + H(+). The chain is Phenylalanine--tRNA ligase alpha subunit from Metallosphaera sedula (strain ATCC 51363 / DSM 5348 / JCM 9185 / NBRC 15509 / TH2).